The primary structure comprises 83 residues: Mu-theraphotoxin-Hhn2j 4 (83 aa).

The N-terminal stretch at Met1 to Ala21 is a signal peptide. Residues Ser22 to Arg48 constitute a propeptide that is removed on maturation. Disulfide bonds link Cys50/Cys65, Cys57/Cys70, and Cys64/Cys77. Residue Leu81 is modified to Leucine amide.

It belongs to the neurotoxin 10 (Hwtx-1) family. 15 (Hntx-3) subfamily. In terms of assembly, monomer. Expressed by the venom gland.

The protein localises to the secreted. Functionally, lethal neurotoxin. Selectively blocks tetrodotoxin-sensitive voltage-gated sodium channels (Nav). Does not affect tetrodotoxin-resistant voltage-gated sodium channels or calcium channels. This Cyriopagopus hainanus (Chinese bird spider) protein is Mu-theraphotoxin-Hhn2j 4.